Here is a 286-residue protein sequence, read N- to C-terminus: Secretory carrier-associated membrane protein 2 (286 aa).

Basic and acidic residues-rich tracts occupy residues 1-10 (MAGRYDRNPF) and 54-63 (STKDMKKKEK). A disordered region spans residues 1–63 (MAGRYDRNPF…STKDMKKKEK (63 aa)). The Cytoplasmic portion of the chain corresponds to 1–126 (MAGRYDRNPF…LQRMQYLAFS (126 aa)). Residues 52-89 (LDSTKDMKKKEKELQAKEAELNKRESELRRREEAASRA) adopt a coiled-coil conformation. 4 helical membrane-spanning segments follow: residues 127-147 (SLLGLAACLFWNIIATTAAWI), 152-172 (VMIWLLAIIYFISGVPGAYVL), 189-209 (FGWFFLFYLIHILFCIWSAVA), and 237-257 (IFYFIGFGLFCLESLLSVVVI). The Cytoplasmic portion of the chain corresponds to 258-286 (QQVYMYFRGSGKAAEMKREAARGAMRSAF).

This sequence belongs to the SCAMP family.

It is found in the cell membrane. The protein localises to the cytoplasmic vesicle. The protein resides in the secretory vesicle membrane. Its function is as follows. Probably involved in membrane trafficking. This is Secretory carrier-associated membrane protein 2 (SCAMP2) from Oryza sativa subsp. japonica (Rice).